Here is a 221-residue protein sequence, read N- to C-terminus: MDHYVKMEDGKVMPIQEMLKSIERYNPEHLKVIEAYVEDQAKDNKYDLEANLACLKLYQFNPQMMNLDVTYTILLKSLTNFPHTDFVLCKCLLLPAQMNDDSVKEIVYLADILEKCDFTLFWSRVQKNPQFFKKITGFSESIRKFVCHVVGITFQSIEKQYLVRLLGDVDDKVLNAWVKKNGWKEEGEYILVAQQEGNIKTKHITEKIDFENLGPLMANCL.

Residues 46 to 207 (YDLEANLACL…NIKTKHITEK (162 aa)) form the PCI domain.

It belongs to the eIF-3 subunit K family. As to quaternary structure, component of the eukaryotic translation initiation factor 3 (eIF-3) complex.

The protein resides in the cytoplasm. Its function is as follows. Component of the eukaryotic translation initiation factor 3 (eIF-3) complex, which is involved in protein synthesis of a specialized repertoire of mRNAs and, together with other initiation factors, stimulates binding of mRNA and methionyl-tRNAi to the 40S ribosome. The eIF-3 complex specifically targets and initiates translation of a subset of mRNAs involved in cell proliferation. The sequence is that of Eukaryotic translation initiation factor 3 subunit K from Culex quinquefasciatus (Southern house mosquito).